The primary structure comprises 82 residues: Cytochrome c-551 (82 aa).

The heme c site is built by C12, C15, H16, and M61.

Post-translationally, binds 1 heme c group covalently per subunit.

Its function is as follows. This is a prokaryotic monoheme cytochrome, unreactive with mitochondrial cytochrome C oxidase or reductase. It functions in nitrite and nitrate respiration in Pseudomonas, but it is also found in other bacteria. This is Cytochrome c-551 from Pseudomonas denitrificans.